The following is a 174-amino-acid chain: Gamma-crystallin C (174 aa).

Beta/gamma crystallin 'Greek key' domains lie at 2-40 (GKIT…RVES) and 41-83 (GCWM…CLIP). The residue at position 23 (C23) is an S-methylcysteine. A connecting peptide region spans residues 84–87 (QTGS). 2 Beta/gamma crystallin 'Greek key' domains span residues 88-128 (HRLR…HVLE) and 129-171 (GCWV…RRVV).

The protein belongs to the beta/gamma-crystallin family. In terms of assembly, monomer.

In terms of biological role, crystallins are the dominant structural components of the vertebrate eye lens. The sequence is that of Gamma-crystallin C (CRYGC) from Macaca mulatta (Rhesus macaque).